Reading from the N-terminus, the 101-residue chain is Small ribosomal subunit protein uS14 (101 aa).

Belongs to the universal ribosomal protein uS14 family. In terms of assembly, part of the 30S ribosomal subunit. Contacts proteins S3 and S10.

Binds 16S rRNA, required for the assembly of 30S particles and may also be responsible for determining the conformation of the 16S rRNA at the A site. The sequence is that of Small ribosomal subunit protein uS14 from Opitutus terrae (strain DSM 11246 / JCM 15787 / PB90-1).